The following is a 267-amino-acid chain: Protein HesA, heterocyst (267 aa).

Belongs to the HesA/MoeB/ThiF family.

This is Protein HesA, heterocyst (hesA1) from Trichormus variabilis (strain ATCC 29413 / PCC 7937) (Anabaena variabilis).